A 301-amino-acid polypeptide reads, in one-letter code: Light-independent protochlorophyllide reductase iron-sulfur ATP-binding protein (301 aa).

A compositionally biased stretch (low complexity) spans 1–13 (MNVTLRPPLAAAP). Residues 1–22 (MNVTLRPPLAAAPRRPDGAGSV) are disordered. Residues 45–50 (GIGKST) and K74 each bind ATP. S49 contributes to the Mg(2+) binding site. Residues C130 and C164 each contribute to the [4Fe-4S] cluster site. Residues 215–216 (NR) and 239–241 (PDL) each bind ATP.

It belongs to the NifH/BchL/ChlL family. Homodimer. Protochlorophyllide reductase is composed of three subunits; BchL, BchN and BchB. [4Fe-4S] cluster serves as cofactor.

It catalyses the reaction chlorophyllide a + oxidized 2[4Fe-4S]-[ferredoxin] + 2 ADP + 2 phosphate = protochlorophyllide a + reduced 2[4Fe-4S]-[ferredoxin] + 2 ATP + 2 H2O. Its pathway is porphyrin-containing compound metabolism; bacteriochlorophyll biosynthesis (light-independent). In terms of biological role, component of the dark-operative protochlorophyllide reductase (DPOR) that uses Mg-ATP and reduced ferredoxin to reduce ring D of protochlorophyllide (Pchlide) to form chlorophyllide a (Chlide). This reaction is light-independent. The L component serves as a unique electron donor to the NB-component of the complex, and binds Mg-ATP. This is Light-independent protochlorophyllide reductase iron-sulfur ATP-binding protein from Bradyrhizobium sp. (strain ORS 278).